The following is a 327-amino-acid chain: Glycerol-3-phosphate dehydrogenase [NAD(P)+] (327 aa).

NADPH contacts are provided by phenylalanine 13, arginine 34, and lysine 107. Sn-glycerol 3-phosphate-binding residues include lysine 107 and glycine 135. Alanine 139 serves as a coordination point for NADPH. Sn-glycerol 3-phosphate contacts are provided by lysine 190, aspartate 243, serine 253, arginine 254, and asparagine 255. The active-site Proton acceptor is lysine 190. Arginine 254 lines the NADPH pocket. 2 residues coordinate NADPH: valine 276 and glutamate 277.

The protein belongs to the NAD-dependent glycerol-3-phosphate dehydrogenase family.

It localises to the cytoplasm. The catalysed reaction is sn-glycerol 3-phosphate + NAD(+) = dihydroxyacetone phosphate + NADH + H(+). It catalyses the reaction sn-glycerol 3-phosphate + NADP(+) = dihydroxyacetone phosphate + NADPH + H(+). The protein operates within membrane lipid metabolism; glycerophospholipid metabolism. Catalyzes the reduction of the glycolytic intermediate dihydroxyacetone phosphate (DHAP) to sn-glycerol 3-phosphate (G3P), the key precursor for phospholipid synthesis. This chain is Glycerol-3-phosphate dehydrogenase [NAD(P)+], found in Rhizobium etli (strain ATCC 51251 / DSM 11541 / JCM 21823 / NBRC 15573 / CFN 42).